Reading from the N-terminus, the 282-residue chain is Shikimate dehydrogenase (NADP(+)) (282 aa).

Residues 15–17 (SKS) and threonine 62 contribute to the shikimate site. The active-site Proton acceptor is the lysine 66. 2 residues coordinate shikimate: asparagine 87 and aspartate 103. NADP(+)-binding positions include 127 to 131 (GAGGA), 151 to 156 (NRTHTK), and methionine 220. Tyrosine 222 contacts shikimate. Glycine 244 provides a ligand contact to NADP(+).

It belongs to the shikimate dehydrogenase family. In terms of assembly, homodimer.

It catalyses the reaction shikimate + NADP(+) = 3-dehydroshikimate + NADPH + H(+). It participates in metabolic intermediate biosynthesis; chorismate biosynthesis; chorismate from D-erythrose 4-phosphate and phosphoenolpyruvate: step 4/7. Its function is as follows. Involved in the biosynthesis of the chorismate, which leads to the biosynthesis of aromatic amino acids. Catalyzes the reversible NADPH linked reduction of 3-dehydroshikimate (DHSA) to yield shikimate (SA). The protein is Shikimate dehydrogenase (NADP(+)) of Shewanella putrefaciens (strain CN-32 / ATCC BAA-453).